Here is a 159-residue protein sequence, read N- to C-terminus: Ribosomal RNA large subunit methyltransferase H (159 aa).

S-adenosyl-L-methionine-binding positions include L76, G108, and 127-132 (FGRLTL).

It belongs to the RNA methyltransferase RlmH family. Homodimer.

It localises to the cytoplasm. The enzyme catalyses pseudouridine(1915) in 23S rRNA + S-adenosyl-L-methionine = N(3)-methylpseudouridine(1915) in 23S rRNA + S-adenosyl-L-homocysteine + H(+). Its function is as follows. Specifically methylates the pseudouridine at position 1915 (m3Psi1915) in 23S rRNA. The sequence is that of Ribosomal RNA large subunit methyltransferase H from Streptococcus pneumoniae (strain 70585).